We begin with the raw amino-acid sequence, 65 residues long: uncharacterized protein (65 aa).

This is an uncharacterized protein from Acidianus filamentous virus 1 (isolate United States/Yellowstone) (AFV-1).